Here is a 201-residue protein sequence, read N- to C-terminus: Cold shock domain-containing protein 4 (201 aa).

Serine 2 is subject to N-acetylserine. Residues 14-81 (RRKGTVKWFD…RPKAIEVSGP (68 aa)) form the CSD domain. The tract at residues 66 to 109 (EVDNSGRPKAIEVSGPDGAPVQGNSGGGGSSGGRGGFGGGGGRG) is disordered. Residues 89 to 109 (NSGGGGSSGGRGGFGGGGGRG) are compositionally biased toward gly residues. CCHC-type zinc fingers lie at residues 136 to 153 (NSCFKCGEPGHMARECSQ) and 180 to 197 (LSCYSCGESGHFARDCTS).

Belongs to the cold shock protein (CSP) family. In terms of tissue distribution, mostly expressed in shoot apices and siliques, and, to a lower extent, in roots, cotyledons, stems, shoots, leaves, floral buds and flowers. Present in shoot apical meristems and siliques (at protein level). Very low levels are observed in cv. Landsberg erecta compared to cv. Columbia.

It is found in the cytoplasm. Its subcellular location is the nucleus. The protein localises to the nucleolus. Functionally, chaperone that binds to and unwinds RNA and both single-stranded DNA and double-stranded DNA (ssDNA and dsDNA DNA). Regulates the flowering transition and flower and seed development, particularly at late stages of embryo development, through regulation of gene expression (including MEA, FIS2, AP1, CAL, AG and SHP2). The polypeptide is Cold shock domain-containing protein 4 (CSP4) (Arabidopsis thaliana (Mouse-ear cress)).